The primary structure comprises 728 residues: Microtubule-associated protein VP5 (728 aa).

It belongs to the reoviridae microtubule-associated protein family.

It localises to the virion. The protein resides in the host cytoplasm. It is found in the host cytoskeleton. Its function is as follows. Minor inner capsid component. Displays NTPase and RNA 5'-triphosphatase (RTPase) activities. May function as a cofactor of polymerase. Associates with microtubules and plays a role in the formation, structural organization and morphology of viral inclusions, where the assembly of cores and the replication of viral RNA occur. This is Microtubule-associated protein VP5 (S5) from Aquareovirus C (isolate Golden shiner/USA/GSRV/1977) (AQRV-C).